The primary structure comprises 231 residues: Proteasome subunit alpha type-2 (231 aa).

It belongs to the peptidase T1A family. In terms of assembly, the 26S proteasome consists of a 20S proteasome core and two 19S regulatory subunits. The 20S proteasome core is composed of 28 subunits that are arranged in four stacked rings, resulting in a barrel-shaped structure. The two end rings are each formed by seven alpha subunits, and the two central rings are each formed by seven beta subunits. The catalytic chamber with the active sites is on the inside of the barrel.

Its subcellular location is the cytoplasm. It localises to the nucleus. The proteasome is a multicatalytic proteinase complex which is characterized by its ability to cleave peptides with Arg, Phe, Tyr, Leu, and Glu adjacent to the leaving group at neutral or slightly basic pH. The proteasome has an ATP-dependent proteolytic activity. This is Proteasome subunit alpha type-2 (pas-2) from Caenorhabditis elegans.